We begin with the raw amino-acid sequence, 354 residues long: Glycerol-3-phosphate dehydrogenase [NAD(+)], glycosomal (354 aa).

Residues 15-20 (GSGAFG), F90, K118, and A150 each bind NAD(+). K118 provides a ligand contact to substrate. K203 acts as the Proton acceptor in catalysis. Residues R267 and E293 each coordinate NAD(+). 267-268 (RN) serves as a coordination point for substrate. Positions 352–354 (SKM) match the Microbody targeting signal motif.

This sequence belongs to the NAD-dependent glycerol-3-phosphate dehydrogenase family.

It localises to the glycosome. The catalysed reaction is sn-glycerol 3-phosphate + NAD(+) = dihydroxyacetone phosphate + NADH + H(+). This Trypanosoma brucei rhodesiense protein is Glycerol-3-phosphate dehydrogenase [NAD(+)], glycosomal (GPD).